Consider the following 202-residue polypeptide: Probable nicotinate-nucleotide adenylyltransferase (202 aa).

Belongs to the NadD family.

It catalyses the reaction nicotinate beta-D-ribonucleotide + ATP + H(+) = deamido-NAD(+) + diphosphate. It functions in the pathway cofactor biosynthesis; NAD(+) biosynthesis; deamido-NAD(+) from nicotinate D-ribonucleotide: step 1/1. In terms of biological role, catalyzes the reversible adenylation of nicotinate mononucleotide (NaMN) to nicotinic acid adenine dinucleotide (NaAD). The chain is Probable nicotinate-nucleotide adenylyltransferase from Clostridium perfringens (strain 13 / Type A).